Here is a 247-residue protein sequence, read N- to C-terminus: Protein-L-isoaspartate O-methyltransferase 2 (247 aa).

The active site involves Ser-97.

This sequence belongs to the methyltransferase superfamily. L-isoaspartyl/D-aspartyl protein methyltransferase family.

It is found in the cytoplasm. It catalyses the reaction [protein]-L-isoaspartate + S-adenosyl-L-methionine = [protein]-L-isoaspartate alpha-methyl ester + S-adenosyl-L-homocysteine. Functionally, catalyzes the methyl esterification of L-isoaspartyl residues in peptides and proteins that result from spontaneous decomposition of normal L-aspartyl and L-asparaginyl residues. It plays a role in the repair and/or degradation of damaged proteins. The sequence is that of Protein-L-isoaspartate O-methyltransferase 2 from Syntrophobacter fumaroxidans (strain DSM 10017 / MPOB).